A 440-amino-acid chain; its full sequence is uncharacterized protein (440 aa).

A signal peptide spans methionine 1 to alanine 19.

This is an uncharacterized protein from Rickettsia typhi (strain ATCC VR-144 / Wilmington).